The following is a 298-amino-acid chain: Ribosomal protein L11 methyltransferase (298 aa).

S-adenosyl-L-methionine-binding residues include Thr-152, Gly-176, Asp-198, and Asn-236.

This sequence belongs to the methyltransferase superfamily. PrmA family.

The protein localises to the cytoplasm. The enzyme catalyses L-lysyl-[protein] + 3 S-adenosyl-L-methionine = N(6),N(6),N(6)-trimethyl-L-lysyl-[protein] + 3 S-adenosyl-L-homocysteine + 3 H(+). Its function is as follows. Methylates ribosomal protein L11. The sequence is that of Ribosomal protein L11 methyltransferase from Polaromonas sp. (strain JS666 / ATCC BAA-500).